The following is a 305-amino-acid chain: GMP synthase [glutamine-hydrolyzing] subunit B (305 aa).

A GMPS ATP-PPase domain is found at 2–184 (VKTEKFIQKS…LGLPPEIQHR (183 aa)). 29-35 (SGGVDSS) is a binding site for ATP.

Heterodimer composed of a glutamine amidotransferase subunit (A) and a GMP-binding subunit (B).

It catalyses the reaction XMP + L-glutamine + ATP + H2O = GMP + L-glutamate + AMP + diphosphate + 2 H(+). Its pathway is purine metabolism; GMP biosynthesis; GMP from XMP (L-Gln route): step 1/1. Catalyzes the synthesis of GMP from XMP. This chain is GMP synthase [glutamine-hydrolyzing] subunit B, found in Methanoregula boonei (strain DSM 21154 / JCM 14090 / 6A8).